Consider the following 176-residue polypeptide: Shikimate kinase (176 aa).

10 to 15 (TSGKSS) is an ATP binding site. Serine 14 is a Mg(2+) binding site. Positions 32, 81, and 138 each coordinate substrate.

Belongs to the shikimate kinase family. Monomer. Mg(2+) serves as cofactor.

Its subcellular location is the cytoplasm. It catalyses the reaction shikimate + ATP = 3-phosphoshikimate + ADP + H(+). It functions in the pathway metabolic intermediate biosynthesis; chorismate biosynthesis; chorismate from D-erythrose 4-phosphate and phosphoenolpyruvate: step 5/7. Functionally, catalyzes the specific phosphorylation of the 3-hydroxyl group of shikimic acid using ATP as a cosubstrate. The polypeptide is Shikimate kinase (Chlamydia pneumoniae (Chlamydophila pneumoniae)).